A 275-amino-acid polypeptide reads, in one-letter code: Structure-specific endonuclease subunit SLX1 (275 aa).

Residues 12-95 (RFFGVYLLYC…QHPHASRRLA (84 aa)) enclose the GIY-YIG domain. Over residues 148-161 (HVPLAFGPPPPQAP) the composition is skewed to pro residues. A disordered region spans residues 148-179 (HVPLAFGPPPPQAPAPRRRAGPFDDAEPEPDQ). The SLX1-type zinc-finger motif lies at 186–238 (CSLCAQTIQDEEGPLCCPHPGCLLRAHVICLAEEFLQEEPGQLLPLEGQCPCC).

It belongs to the SLX1 family. Forms a heterodimer with SLX4. A divalent metal cation serves as cofactor.

It is found in the nucleus. Catalytic subunit of the SLX1-SLX4 structure-specific endonuclease that resolves DNA secondary structures generated during DNA repair and recombination. Has endonuclease activity towards branched DNA substrates, introducing single-strand cuts in duplex DNA close to junctions with ss-DNA. Has a preference for 5'-flap structures, and promotes symmetrical cleavage of static and migrating Holliday junctions (HJs). Resolves HJs by generating two pairs of ligatable, nicked duplex products. In Homo sapiens (Human), this protein is Structure-specific endonuclease subunit SLX1.